Here is a 194-residue protein sequence, read N- to C-terminus: Probable GTP-binding protein EngB (194 aa).

Residues 22–194 enclose the EngB-type G domain; sequence DLPEFALAGR…KFWDWIEDKM (173 aa). GTP-binding positions include 30 to 37, 57 to 61, 75 to 78, 142 to 145, and 175 to 177; these read GRSNVGKS, GKTQT, DVPG, TKMD, and FSS. Mg(2+) contacts are provided by Ser37 and Thr59.

Belongs to the TRAFAC class TrmE-Era-EngA-EngB-Septin-like GTPase superfamily. EngB GTPase family. Mg(2+) is required as a cofactor.

In terms of biological role, necessary for normal cell division and for the maintenance of normal septation. The protein is Probable GTP-binding protein EngB of Lactobacillus gasseri (strain ATCC 33323 / DSM 20243 / BCRC 14619 / CIP 102991 / JCM 1131 / KCTC 3163 / NCIMB 11718 / NCTC 13722 / AM63).